Here is a 230-residue protein sequence, read N- to C-terminus: Cytochrome c oxidase subunit 2 (230 aa).

The Mitochondrial intermembrane segment spans residues 1 to 14 (MAHPSQLGFQDAAS). Residues 15–45 (PVMEELLHFHDHTLMIVFLISTLVLYIIMAM) traverse the membrane as a helical segment. Residues 46-59 (VSTKLTNKYILDSQ) are Mitochondrial matrix-facing. Residues 60 to 87 (EIEIVWTILPAVILIMIALPSLRILYLM) form a helical membrane-spanning segment. The Mitochondrial intermembrane segment spans residues 88–230 (DEINDPHLTI…SWSSLMLEEA (143 aa)). Positions 161, 196, 198, 200, 204, and 207 each coordinate Cu cation. E198 is a Mg(2+) binding site.

This sequence belongs to the cytochrome c oxidase subunit 2 family. Component of the cytochrome c oxidase (complex IV, CIV), a multisubunit enzyme composed of 14 subunits. The complex is composed of a catalytic core of 3 subunits MT-CO1, MT-CO2 and MT-CO3, encoded in the mitochondrial DNA, and 11 supernumerary subunits COX4I, COX5A, COX5B, COX6A, COX6B, COX6C, COX7A, COX7B, COX7C, COX8 and NDUFA4, which are encoded in the nuclear genome. The complex exists as a monomer or a dimer and forms supercomplexes (SCs) in the inner mitochondrial membrane with NADH-ubiquinone oxidoreductase (complex I, CI) and ubiquinol-cytochrome c oxidoreductase (cytochrome b-c1 complex, complex III, CIII), resulting in different assemblies (supercomplex SCI(1)III(2)IV(1) and megacomplex MCI(2)III(2)IV(2)). Found in a complex with TMEM177, COA6, COX18, COX20, SCO1 and SCO2. Interacts with TMEM177 in a COX20-dependent manner. Interacts with COX20. Interacts with COX16. Cu cation serves as cofactor.

It localises to the mitochondrion inner membrane. The catalysed reaction is 4 Fe(II)-[cytochrome c] + O2 + 8 H(+)(in) = 4 Fe(III)-[cytochrome c] + 2 H2O + 4 H(+)(out). In terms of biological role, component of the cytochrome c oxidase, the last enzyme in the mitochondrial electron transport chain which drives oxidative phosphorylation. The respiratory chain contains 3 multisubunit complexes succinate dehydrogenase (complex II, CII), ubiquinol-cytochrome c oxidoreductase (cytochrome b-c1 complex, complex III, CIII) and cytochrome c oxidase (complex IV, CIV), that cooperate to transfer electrons derived from NADH and succinate to molecular oxygen, creating an electrochemical gradient over the inner membrane that drives transmembrane transport and the ATP synthase. Cytochrome c oxidase is the component of the respiratory chain that catalyzes the reduction of oxygen to water. Electrons originating from reduced cytochrome c in the intermembrane space (IMS) are transferred via the dinuclear copper A center (CU(A)) of subunit 2 and heme A of subunit 1 to the active site in subunit 1, a binuclear center (BNC) formed by heme A3 and copper B (CU(B)). The BNC reduces molecular oxygen to 2 water molecules using 4 electrons from cytochrome c in the IMS and 4 protons from the mitochondrial matrix. The polypeptide is Cytochrome c oxidase subunit 2 (MT-CO2) (Squalus acanthias (Spiny dogfish)).